The sequence spans 458 residues: Morphogenetic regulator of filamentous growth protein 1 (458 aa).

The interval 401 to 458 (KKDSGSEPLHAKRRRNSGISPRTTTLGPNGNSNTSNEELPTSDVNDINKDMTKKKMKF) is disordered. Residues 417–445 (SGISPRTTTLGPNGNSNTSNEELPTSDVN) are compositionally biased toward polar residues. Basic and acidic residues predominate over residues 446–458 (DINKDMTKKKMKF).

Belongs to the MFG1 family. As to quaternary structure, interacts with FLO8 and MSS11, both morphogenetic transcription factors binding directly to the FLO11 promoter.

The protein localises to the nucleus. In terms of biological role, transcriptional regulator with a general role in all morphogenetically distinct forms of filamentous growth, namely haploid invasive growth, biofilm formation, and diploid pseudohyphal growth. May control FLO11 gene expression as part of a promoter-bound complex with FLO8 and MSS1. This Saccharomyces cerevisiae (strain ATCC 204508 / S288c) (Baker's yeast) protein is Morphogenetic regulator of filamentous growth protein 1 (MFG1).